Here is a 59-residue protein sequence, read N- to C-terminus: MFTVFLLVVLATTVVSFSTDDESDGSNEEPSADQAARSAMNRPPGCCNNPACVKHRCGG.

The N-terminal stretch at 1–16 (MFTVFLLVVLATTVVS) is a signal peptide. Residues 17 to 42 (FSTDDESDGSNEEPSADQAARSAMNR) constitute a propeptide that is removed on maturation. Residues 18 to 43 (STDDESDGSNEEPSADQAARSAMNRP) form a disordered region. A compositionally biased stretch (acidic residues) spans 19 to 31 (TDDESDGSNEEPS). 2 disulfide bridges follow: Cys46-Cys52 and Cys47-Cys57. Gly58 bears the Glycine amide mark.

It belongs to the conotoxin A superfamily. Expressed by the venom duct.

Its subcellular location is the secreted. The protein is Conotoxin Bu1.2 of Conus bullatus (Bubble cone).